The sequence spans 957 residues: Exoribonuclease II, mitochondrial (957 aa).

Residues Met-1–Ile-54 constitute a mitochondrion transit peptide. Residues Arg-503–Leu-843 form the RNB domain.

This sequence belongs to the RNR ribonuclease family.

Its subcellular location is the mitochondrion. It carries out the reaction Exonucleolytic cleavage in the 3'- to 5'-direction to yield nucleoside 5'-phosphates.. Its function is as follows. Required for intron-independent turnover and processing of mitochondrial RNA. Participates in 3'-mtRNA processing where it hydrolyzes single-stranded RNA or partially double-stranded RNA with 3'-single-stranded tails. This Schizosaccharomyces pombe (strain 972 / ATCC 24843) (Fission yeast) protein is Exoribonuclease II, mitochondrial (rpm1).